The sequence spans 345 residues: Alanine racemase (345 aa).

The active-site Proton acceptor; specific for D-alanine is the lysine 33. Lysine 33 is modified (N6-(pyridoxal phosphate)lysine). Residue arginine 128 coordinates substrate. Tyrosine 242 serves as the catalytic Proton acceptor; specific for L-alanine. Residue methionine 291 participates in substrate binding.

The protein belongs to the alanine racemase family. Pyridoxal 5'-phosphate is required as a cofactor.

The catalysed reaction is L-alanine = D-alanine. Its pathway is amino-acid biosynthesis; D-alanine biosynthesis; D-alanine from L-alanine: step 1/1. Catalyzes the interconversion of L-alanine and D-alanine. May also act on other amino acids. The chain is Alanine racemase (alr) from Ruegeria sp. (strain TM1040) (Silicibacter sp.).